The primary structure comprises 273 residues: GTP cyclohydrolase MptA (273 aa).

It belongs to the GTP cyclohydrolase IV family. Homodimer. The cofactor is Fe(2+).

It catalyses the reaction GTP + H2O = 7,8-dihydroneopterin 2',3'-cyclic phosphate + formate + diphosphate + H(+). It functions in the pathway cofactor biosynthesis; 5,6,7,8-tetrahydromethanopterin biosynthesis. Converts GTP to 7,8-dihydro-D-neopterin 2',3'-cyclic phosphate, the first intermediate in the biosynthesis of coenzyme methanopterin. In Picrophilus torridus (strain ATCC 700027 / DSM 9790 / JCM 10055 / NBRC 100828 / KAW 2/3), this protein is GTP cyclohydrolase MptA.